The following is a 136-amino-acid chain: Nodulation protein K (136 aa).

The sequence is that of Nodulation protein K (nodK) from Bradyrhizobium sp. (strain ANU 289).